A 260-amino-acid chain; its full sequence is 3-alpha-(or 20-beta)-hydroxysteroid dehydrogenase (260 aa).

NAD(+)-binding residues include Arg17, Met19, Asp38, Asp61, Val62, Asn88, Tyr153, Lys157, Val186, Thr188, and Thr191. Tyr153 acts as the Proton acceptor in catalysis.

The protein belongs to the short-chain dehydrogenases/reductases (SDR) family. Homotetramer.

It carries out the reaction androstan-3alpha,17beta-diol + NAD(+) = 17beta-hydroxyandrostanone + NADH + H(+). It functions in the pathway lipid metabolism; steroid degradation. Functionally, probably involved in steroid metabolism. This chain is 3-alpha-(or 20-beta)-hydroxysteroid dehydrogenase (fabG3), found in Mycobacterium tuberculosis (strain CDC 1551 / Oshkosh).